The chain runs to 995 residues: Protein translocase subunit SecA (995 aa).

Residues glutamine 86, 104-108 (GEGKT), and aspartate 535 contribute to the ATP site. The segment at 883–911 (AQTVSSDGNGEVVRKPQRRSTPQIGRNEL) is disordered. Residues cysteine 912, cysteine 914, cysteine 923, and histidine 924 each coordinate Zn(2+). Residues 939 to 995 (PSAPPASKALKSTPATQTAVAEEAAKIQAAINSGKLPPTQTTPRGRQAPSVPRGKKR) form a disordered region. The segment covering 957-969 (AVAEEAAKIQAAI) has biased composition (low complexity).

This sequence belongs to the SecA family. As to quaternary structure, monomer and homodimer. Part of the essential Sec protein translocation apparatus which comprises SecA, SecYEG and auxiliary proteins SecDF. Other proteins may also be involved. Zn(2+) is required as a cofactor.

The protein resides in the cell membrane. It is found in the cytoplasm. The enzyme catalyses ATP + H2O + cellular proteinSide 1 = ADP + phosphate + cellular proteinSide 2.. In terms of biological role, part of the Sec protein translocase complex. Interacts with the SecYEG preprotein conducting channel. Has a central role in coupling the hydrolysis of ATP to the transfer of proteins into and across the cell membrane, serving as an ATP-driven molecular motor driving the stepwise translocation of polypeptide chains across the membrane. The protein is Protein translocase subunit SecA of Chloroflexus aurantiacus (strain ATCC 29366 / DSM 635 / J-10-fl).